Reading from the N-terminus, the 433-residue chain is MSWAQAILLARGASRGWGGICSTALTGAPFSQVPPQAPRGLRCSAAAHNPDSSLVPHPPEPPRRPVKALAVHEELFRPALDGARNKANFVRAVQNFTEYNVHKRGHVDFIYLALRKMREYGVERDLSVYNLLLDIFPKEVFRPRNIFHSIFLHYPRQQECGIAVLEQMENHGVMPNKETEFLLLQIFGRKSYPMLKLVRMKLWFTRFKNINPFPVPRDLPQDPVDLASLALRHMEPDLSARVTTYQMPLLKDSPNAMDPTETHIVGIQSPEQQSALARHDPARPIFVEGPFSLWLRDKCVYYHILRADLLPPEEREVEEIPEEWNLYYPMQLDLAYGRSSWDDYEFNIDEVEEGPVFAICVAGAHDQATLAKWIQGLQETNPALARIPVVFRLSGSSGELLPSSSELEEPPPPPPEGQEEEEDSQQRQQQGQS.

A mitochondrion-targeting transit peptide spans Met1–His48. The segment at Gln36 to Arg63 is disordered. Lys372 participates in a covalent cross-link: Glycyl lysine isopeptide (Lys-Gly) (interchain with G-Cter in ubiquitin). Positions Ser397–Ser433 are disordered.

This sequence belongs to the ECSIT family. As to quaternary structure, interacts with MAP3K1, SMAD4 and TRAF6. Interacts with SMAD1 only after BMP4-treatment. Part of the mitochondrial complex I assembly/MCIA complex that comprises at least the core subunits TMEM126B, NDUFAF1, ECSIT and ACAD9 and complement subunits such as COA1 and TMEM186. Interacts with NDUFAF1. Interacts with ACAD9. Interacts with TRIM59. Interacts with TMEM70 and TMEM242. Interacts (when ubiquitinated) with NF-kappa-B subunits RELA and NFKB1. Interacts with RIGI, IFIT1 and MAVS; these interactions promote RLR-mediated type I IFN induction. Interacts with SQSTM1; this interaction inhibits TLR4 signaling via functional regulation of the TRAF6-ECSIT complex. Interacts with cereblon/CRBN; this interaction inhibits the ubiquitination of ECSIT. Ubiquitinated on Lys-372; leading to translocation in the nucleus together with RELA and NFKB1 and expression of NF-kappa-B-dependent genes.

It is found in the cytoplasm. The protein localises to the nucleus. Its subcellular location is the mitochondrion. Functionally, adapter protein that plays a role in different signaling pathways including TLRs and IL-1 pathways or innate antiviral induction signaling. Plays a role in the activation of NF-kappa-B by forming a signal complex with TRAF6 and TAK1/MAP3K7 to activate TAK1/MAP3K7 leading to activation of IKKs. Once ubiquitinated, interacts with the dissociated RELA and NFKB1 proteins and translocates to the nucleus where it induces NF-kappa-B-dependent gene expression. Plays a role in innate antiviral immune response by bridging the pattern recognition receptors RIGI and MDA5/IFIT1 to the MAVS complex at the mitochondrion. Promotes proteolytic activation of MAP3K1. Involved in the BMP signaling pathway. Required for normal embryonic development. In terms of biological role, as part of the MCIA complex, involved in the assembly of the mitochondrial complex I. This chain is Evolutionarily conserved signaling intermediate in Toll pathway, mitochondrial, found in Bos taurus (Bovine).